We begin with the raw amino-acid sequence, 507 residues long: Glycerol kinase (507 aa).

Threonine 15 is an ADP binding site. Threonine 15, threonine 16, and serine 17 together coordinate ATP. Threonine 15 contributes to the sn-glycerol 3-phosphate binding site. Arginine 19 contacts ADP. Residues arginine 85, glutamate 86, tyrosine 137, and aspartate 250 each coordinate sn-glycerol 3-phosphate. Residues arginine 85, glutamate 86, tyrosine 137, aspartate 250, and glutamine 251 each coordinate glycerol. Threonine 272, glycine 316, and glycine 418 together coordinate ADP. ATP contacts are provided by threonine 272, glycine 316, and glycine 418.

The protein belongs to the FGGY kinase family.

It catalyses the reaction glycerol + ATP = sn-glycerol 3-phosphate + ADP + H(+). It participates in polyol metabolism; glycerol degradation via glycerol kinase pathway; sn-glycerol 3-phosphate from glycerol: step 1/1. Its activity is regulated as follows. Inhibited by fructose 1,6-bisphosphate (FBP). Functionally, key enzyme in the regulation of glycerol uptake and metabolism. Catalyzes the phosphorylation of glycerol to yield sn-glycerol 3-phosphate. The chain is Glycerol kinase from Malacoplasma penetrans (strain HF-2) (Mycoplasma penetrans).